We begin with the raw amino-acid sequence, 447 residues long: Chromosomal replication initiator protein DnaA (447 aa).

The tract at residues 1–66 (MSNRIISILK…SKAIKEAYGK (66 aa)) is domain I, interacts with DnaA modulators. A domain II region spans residues 66 to 102 (KNLDYEIVYETTEPEAFNKSNESYKGPLVKKKPLLIS). Residues 103 to 319 (NLNANYTFEN…GVIIKLIVQS (217 aa)) are domain III, AAA+ region. Glycine 146, glycine 148, lysine 149, and threonine 150 together coordinate ATP. The domain IV, binds dsDNA stretch occupies residues 320-447 (SINKERIGAA…NTMATSSAAG (128 aa)).

This sequence belongs to the DnaA family. As to quaternary structure, oligomerizes as a right-handed, spiral filament on DNA at oriC.

It localises to the cytoplasm. In terms of biological role, plays an essential role in the initiation and regulation of chromosomal replication. ATP-DnaA binds to the origin of replication (oriC) to initiate formation of the DNA replication initiation complex once per cell cycle. Binds the DnaA box (a 9 base pair repeat at the origin) and separates the double-stranded (ds)DNA. Forms a right-handed helical filament on oriC DNA; dsDNA binds to the exterior of the filament while single-stranded (ss)DNA is stabiized in the filament's interior. The ATP-DnaA-oriC complex binds and stabilizes one strand of the AT-rich DNA unwinding element (DUE), permitting loading of DNA polymerase. After initiation quickly degrades to an ADP-DnaA complex that is not apt for DNA replication. Binds acidic phospholipids. In Kosmotoga olearia (strain ATCC BAA-1733 / DSM 21960 / TBF 19.5.1), this protein is Chromosomal replication initiator protein DnaA.